Here is a 479-residue protein sequence, read N- to C-terminus: Acetylcholine receptor subunit alpha-type acr-15 (479 aa).

Positions 1–18 (MLLPILLHFLLLITQLNG) are cleaved as a signal peptide. Over 19 to 230 (SPAEVRLIND…HLRRRTLYYS (212 aa)) the chain is Extracellular. Residues Asn-60 and Asn-92 are each glycosylated (N-linked (GlcNAc...) asparagine). A disulfide bridge links Cys-146 with Cys-160. Residue Asn-200 is glycosylated (N-linked (GlcNAc...) asparagine). Cysteines 208 and 209 form a disulfide. Residues 231-251 (FNLIAPVLLTMILVILGFTVS) traverse the membrane as a helical segment. The Cytoplasmic portion of the chain corresponds to 252–257 (PETCEK). Residues 258–278 (VGLQISVSLAICIFLTIMSEL) traverse the membrane as a helical segment. Residues 279–285 (TPQTSEA) lie on the Extracellular side of the membrane. A helical transmembrane segment spans residues 286–306 (VPLLGVFFHTCNFISVLATSF). At 307–453 (TVYVQSFHFR…WRFAAIVVDR (147 aa)) the chain is on the cytoplasmic side. A helical transmembrane segment spans residues 454 to 474 (LCLLAFSLLIVVVSIIIALRA). Topologically, residues 475–479 (PYLFA) are extracellular.

This sequence belongs to the ligand-gated ion channel (TC 1.A.9) family. Acetylcholine receptor (TC 1.A.9.1) subfamily. As to expression, expressed in interneurons, motor neurons, pharyngeal neurons and muscles.

The protein resides in the cell membrane. Its subcellular location is the postsynaptic cell membrane. After binding acetylcholine, the AChR responds by an extensive change in conformation that affects all subunits and leads to opening of an ion-conducting channel across the plasma membrane. Activity is required in glutamatergic neurons to mediate nicotine-induced and nicotine-motivated behaviors. This chain is Acetylcholine receptor subunit alpha-type acr-15, found in Caenorhabditis elegans.